A 951-amino-acid chain; its full sequence is Replication protein A 70 kDa DNA-binding subunit C (951 aa).

The interval 139–172 is disordered; that stretch reads AQTNNGTYSGGASMLGPSVAPRAEQAASNSSYGG. A DNA-binding region (OB) is located at residues 320-403; the sequence is WTIKARVTAK…NTLNHDYEIT (84 aa). A C4-type zinc finger spans residues 612–639; it reads CPKLLPVGRQCNKKAINNGDGMWHCDRC.

The protein belongs to the replication factor A protein 1 family. In terms of assembly, heterotrimer of RPA1, RPA2 and RPA3 (canonical replication protein A complex). Interacts with RPA2C.

The protein resides in the nucleus. Its function is as follows. Component of the replication protein A complex (RPA) required for DNA recombination, repair and replication. The activity of RPA is mediated by single-stranded DNA binding and protein interactions. Probably involved in repair of double-strand DNA breaks (DSBs) induced by genotoxic stresses. This chain is Replication protein A 70 kDa DNA-binding subunit C (RPA1C), found in Oryza sativa subsp. japonica (Rice).